A 432-amino-acid chain; its full sequence is Serine/threonine-protein phosphatase 2A activator 1 (432 aa).

This sequence belongs to the PTPA-type PPIase family.

The protein localises to the cytoplasm. Its subcellular location is the nucleus. It catalyses the reaction [protein]-peptidylproline (omega=180) = [protein]-peptidylproline (omega=0). Functionally, PPIases accelerate the folding of proteins. It catalyzes the cis-trans isomerization of proline imidic peptide bonds in oligopeptides. Acts as a regulatory subunit for PP2A-like phosphatases modulating their activity or substrate specificity, probably by inducing a conformational change in the catalytic subunit, a direct target of the PPIase. Can reactivate inactive phosphatase PP2A-phosphatase methylesterase complexes (PP2Ai) in presence of ATP and Mg(2+) by dissociating the inactive form from the complex. The chain is Serine/threonine-protein phosphatase 2A activator 1 (rrd1) from Emericella nidulans (strain FGSC A4 / ATCC 38163 / CBS 112.46 / NRRL 194 / M139) (Aspergillus nidulans).